The sequence spans 404 residues: Argininosuccinate synthase (404 aa).

Residues 12-20 and Ala-39 contribute to the ATP site; that span reads AYSGGLDTS. L-citrulline is bound by residues Tyr-91 and Ser-96. Gly-121 contacts ATP. Residues Thr-123, Asn-127, and Asp-128 each coordinate L-aspartate. L-citrulline is bound at residue Asn-127. L-citrulline contacts are provided by Arg-131, Ser-180, Ser-189, Glu-265, and Tyr-277.

The protein belongs to the argininosuccinate synthase family. Type 1 subfamily. As to quaternary structure, homotetramer.

It is found in the cytoplasm. The catalysed reaction is L-citrulline + L-aspartate + ATP = 2-(N(omega)-L-arginino)succinate + AMP + diphosphate + H(+). It functions in the pathway amino-acid biosynthesis; L-arginine biosynthesis; L-arginine from L-ornithine and carbamoyl phosphate: step 2/3. This chain is Argininosuccinate synthase, found in Vibrio parahaemolyticus serotype O3:K6 (strain RIMD 2210633).